A 910-amino-acid polypeptide reads, in one-letter code: Protein translocase subunit SecA (910 aa).

Residues glutamine 87, 105-109 (GEGKT), and aspartate 512 each bind ATP. 3 stretches are compositionally biased toward basic and acidic residues: residues 561–571 (RHESRRIDNQL), 841–853 (EEER…ELAR), and 880–890 (TFEREARKVGR). 2 disordered regions span residues 561–584 (RHES…AGSS) and 835–910 (EEVD…GKIN). Cysteine 894, cysteine 896, cysteine 905, and histidine 906 together coordinate Zn(2+). Positions 900-910 (KKYKQCHGKIN) are enriched in basic residues.

Belongs to the SecA family. As to quaternary structure, monomer and homodimer. Part of the essential Sec protein translocation apparatus which comprises SecA, SecYEG and auxiliary proteins SecDF-YajC and YidC. Zn(2+) serves as cofactor.

It localises to the cell inner membrane. The protein resides in the cytoplasm. The enzyme catalyses ATP + H2O + cellular proteinSide 1 = ADP + phosphate + cellular proteinSide 2.. In terms of biological role, part of the Sec protein translocase complex. Interacts with the SecYEG preprotein conducting channel. Has a central role in coupling the hydrolysis of ATP to the transfer of proteins into and across the cell membrane, serving both as a receptor for the preprotein-SecB complex and as an ATP-driven molecular motor driving the stepwise translocation of polypeptide chains across the membrane. The polypeptide is Protein translocase subunit SecA (Photobacterium profundum (strain SS9)).